The chain runs to 97 residues: Large ribosomal subunit protein bL27 (97 aa).

Positions 1–21 (MAHKKGVGSSRNGRDSNPKYR) are disordered.

It belongs to the bacterial ribosomal protein bL27 family.

The sequence is that of Large ribosomal subunit protein bL27 from Gemmatimonas aurantiaca (strain DSM 14586 / JCM 11422 / NBRC 100505 / T-27).